The following is a 537-amino-acid chain: Phosphoenolpyruvate carboxykinase (ATP) (537 aa).

Substrate-binding residues include arginine 61, tyrosine 194, and lysine 200. Residues lysine 200, histidine 219, and 235–243 each bind ATP; that span reads GLSGTGKTT. 2 residues coordinate Mn(2+): lysine 200 and histidine 219. Aspartate 256 serves as a coordination point for Mn(2+). Residues glutamate 284, arginine 322, and threonine 448 each contribute to the ATP site. Arginine 322 is a substrate binding site.

The protein belongs to the phosphoenolpyruvate carboxykinase (ATP) family. Requires Mn(2+) as cofactor.

Its subcellular location is the cytoplasm. The catalysed reaction is oxaloacetate + ATP = phosphoenolpyruvate + ADP + CO2. It functions in the pathway carbohydrate biosynthesis; gluconeogenesis. Its function is as follows. Involved in the gluconeogenesis. Catalyzes the conversion of oxaloacetate (OAA) to phosphoenolpyruvate (PEP) through direct phosphoryl transfer between the nucleoside triphosphate and OAA. The protein is Phosphoenolpyruvate carboxykinase (ATP) of Bradyrhizobium sp. (strain ORS 278).